Consider the following 304-residue polypeptide: MKEGPISSSSNFNHIPVMGKEIIRSLKELPSELTKKGLIIDATIGGGGHSAQILENFPGIKIIGLDQDPMAIKAASKKLIKFGTRIEIISTNFADFSHHEQAICVLADLGVSSHQLDEPSRGFSFRLNGPIDMRMNPKEGSSAAELIETLSEQNLADLIYELGEEKRSRRIARKIKNDLAENGPYSGTQDLSYAIAGCFPPKQRYGRIHPSTRTFQALRIAVNNELGSLESLLLKAPNWLLENGLFMVMSFHSLEDRRVKSSFKTDNRLKVLSKKPIRASPEEIELNPRSKSAKLRISAKKFLT.

Residues 47 to 49, Asp66, Phe93, Asp108, and Gln115 each bind S-adenosyl-L-methionine; that span reads GGH.

This sequence belongs to the methyltransferase superfamily. RsmH family.

It localises to the cytoplasm. The enzyme catalyses cytidine(1402) in 16S rRNA + S-adenosyl-L-methionine = N(4)-methylcytidine(1402) in 16S rRNA + S-adenosyl-L-homocysteine + H(+). Specifically methylates the N4 position of cytidine in position 1402 (C1402) of 16S rRNA. The sequence is that of Ribosomal RNA small subunit methyltransferase H from Prochlorococcus marinus (strain NATL2A).